The following is a 95-amino-acid chain: Small ribosomal subunit protein bS6 (95 aa).

Belongs to the bacterial ribosomal protein bS6 family.

Binds together with bS18 to 16S ribosomal RNA. The sequence is that of Small ribosomal subunit protein bS6 from Clostridium novyi (strain NT).